Consider the following 492-residue polypeptide: N-succinylglutamate 5-semialdehyde dehydrogenase (492 aa).

220 to 225 (GSASTG) serves as a coordination point for NAD(+). Catalysis depends on residues Glu243 and Cys277.

Belongs to the aldehyde dehydrogenase family. AstD subfamily.

It carries out the reaction N-succinyl-L-glutamate 5-semialdehyde + NAD(+) + H2O = N-succinyl-L-glutamate + NADH + 2 H(+). It functions in the pathway amino-acid degradation; L-arginine degradation via AST pathway; L-glutamate and succinate from L-arginine: step 4/5. Functionally, catalyzes the NAD-dependent reduction of succinylglutamate semialdehyde into succinylglutamate. The sequence is that of N-succinylglutamate 5-semialdehyde dehydrogenase from Salmonella paratyphi C (strain RKS4594).